The chain runs to 98 residues: Carboxysome shell protein CsoS1C (98 aa).

The 86-residue stretch at 8 to 93 (ALGMIETRGL…VHSEVENILP (86 aa)) folds into the BMC domain.

This sequence belongs to the bacterial microcompartments protein family. CsoS1 subfamily. Homohexamer with a small central pore. Interacts with the N-terminus (residues 1-136) of RuBisCO (CbbL).

The protein resides in the carboxysome. Its function is as follows. One of shell proteins of the carboxysome, a polyhedral inclusion where RuBisCO (ribulose bisphosphate carboxylase, ccbL-ccbS) is sequestered. Assembles into hexamers which make sheets that form the facets of the polyhedral carboxysome. The shell probably limits the diffusion of CO(2) into and out of the carboxysome. There are estimated to be 2970 CsoS1A/CsoS1C proteins per carboxysome (the proteins differ by only 1 residue). Functionally, unlike beta-carboxysomes, alpha-carboxysomes (Cb) can form without cargo protein. CsoS2 is essential for Cb formation and is also capable of targeting foreign proteins to the Cb. The Cb shell assembles with the aid of CsoS2; CsoS1A, CsoS1B and CsoS1C form the majority of the shell while CsoS4A and CsoS4B form vertices. CsoS1D forms pseudohexamers that probably control metabolite flux into and out of the shell. The chain is Carboxysome shell protein CsoS1C from Halothiobacillus neapolitanus (strain ATCC 23641 / c2) (Thiobacillus neapolitanus).